The following is a 1829-amino-acid chain: Iron-regulated protein FrpC (1829 aa).

Hemolysin-type calcium-binding repeat units follow at residues 869 to 886 (FGHN…NDTL), 887 to 904 (IGGA…SDTY), 1015 to 1032 (NGGL…DDLL), 1033 to 1050 (NGDA…NDTL), 1051 to 1068 (DGGE…NDAL), 1069 to 1086 (NGGE…NDTL), 1087 to 1104 (IGGA…SDTY), 1215 to 1232 (NGGL…DDLL), 1233 to 1250 (NGDA…NDTL), 1251 to 1268 (DGGE…NDAL), 1269 to 1286 (NGGE…NDTL), 1287 to 1304 (IGGA…SDTY), 1415 to 1432 (NGGL…DDLL), 1433 to 1450 (NGDA…NDTL), 1451 to 1468 (NGGE…NDAL), 1469 to 1486 (NGGE…NDTL), 1487 to 1504 (IGGA…SDTY), 1615 to 1632 (NGGL…DDLL), 1633 to 1650 (NGDA…NDTL), 1651 to 1668 (DGGE…NDAL), 1669 to 1686 (NGGE…NDTL), and 1687 to 1704 (IGGA…SDTY). Positions 1671–1690 (GEGNDHLNGEDGNDTLIGGA) are disordered.

The protein belongs to the RTX prokaryotic toxin (TC 1.C.11) family.

It localises to the cell outer membrane. The protein resides in the secreted. Functionally, may participate in the pathogenesis of meningococcal disease. The sequence is that of Iron-regulated protein FrpC (frpC) from Neisseria meningitidis serogroup B (strain ATCC BAA-335 / MC58).